The chain runs to 158 residues: uncharacterized protein (158 aa).

The HTH asnC-type domain occupies 12 to 73; sequence LDEIDRAILR…LINPFKAGYE (62 aa). Positions 31-50 form a DNA-binding region, H-T-H motif; the sequence is YSEISRRINVPESTVRARVN.

This is an uncharacterized protein from Pyrococcus abyssi (strain GE5 / Orsay).